We begin with the raw amino-acid sequence, 183 residues long: Caspase recruitment domain-containing protein 19 (183 aa).

A disulfide bridge links C7 with C77. Residues 8 to 99 (DRLVQDTPFL…PLHSCLPSRH (92 aa)) enclose the CARD domain. A helical membrane pass occupies residues 122-142 (GPVAFLTCLGLAAGLALLIYC).

As to quaternary structure, associates with BCL10 by CARD-CARD interaction.

Its subcellular location is the endoplasmic reticulum membrane. The protein resides in the mitochondrion membrane. Its function is as follows. Plays a role in inhibiting the effects of BCL10-induced activation of NF-kappa-B. May inhibit the phosphorylation of BCL10 in a CARD-dependent manner. The protein is Caspase recruitment domain-containing protein 19 (CARD19) of Bos taurus (Bovine).